The following is a 225-amino-acid chain: MRIVFDIGGSVLVPEDPDVEFIKAIAYELIKISEDHEVAVVVGGGKVARKYIKAAKTFTPNETFKDYIGIHITRANAMLLIAALGEKAYPFVIQDFRKAWEVIQLKKIPIMGGTHPGHTTDAVSALLAEYLQADLLVVVTNVDGVYDSDPRKNPNARKLDRITPEQLVEIAMEAESKAGGSGVVDALAAKFIQRGRIRTYIVGKKDAYHLFDVVRGKHSGTVVEP.

9–10 lines the ATP pocket; the sequence is GS. Glycine 44 provides a ligand contact to UMP. ATP-binding residues include glycine 45 and arginine 49. UMP-binding positions include aspartate 66 and 114–120; that span reads THPGHTT. ATP contacts are provided by threonine 140, asparagine 141, tyrosine 146, and aspartate 149.

This sequence belongs to the UMP kinase family. In terms of assembly, homohexamer.

It localises to the cytoplasm. It catalyses the reaction UMP + ATP = UDP + ADP. The protein operates within pyrimidine metabolism; CTP biosynthesis via de novo pathway; UDP from UMP (UMPK route): step 1/1. Inhibited by UTP. In terms of biological role, catalyzes the reversible phosphorylation of UMP to UDP. The protein is Uridylate kinase of Thermococcus gammatolerans (strain DSM 15229 / JCM 11827 / EJ3).